An 89-amino-acid chain; its full sequence is MVKLRLKRCGRRQRAIYRIVAIDVRSRREGRALRKVGFYDPIKNQTYLNVPVILYFLEKGAQPTGTVHDISKKAGVFMELRLNHQTKFN.

The protein belongs to the bacterial ribosomal protein bS16 family.

It is found in the plastid. The protein localises to the chloroplast. This chain is Small ribosomal subunit protein bS16c, found in Morus indica (Mulberry).